The following is a 219-amino-acid chain: Thiamine-phosphate synthase (219 aa).

Residues 44–48 (QFREK) and Asn79 each bind 4-amino-2-methyl-5-(diphosphooxymethyl)pyrimidine. Residues Asp80 and Asp99 each contribute to the Mg(2+) site. Ser117 contacts 4-amino-2-methyl-5-(diphosphooxymethyl)pyrimidine. 143-145 (TST) contacts 2-[(2R,5Z)-2-carboxy-4-methylthiazol-5(2H)-ylidene]ethyl phosphate. Lys146 serves as a coordination point for 4-amino-2-methyl-5-(diphosphooxymethyl)pyrimidine. Residues Gly175 and 195–196 (IS) contribute to the 2-[(2R,5Z)-2-carboxy-4-methylthiazol-5(2H)-ylidene]ethyl phosphate site.

It belongs to the thiamine-phosphate synthase family. Mg(2+) is required as a cofactor.

The enzyme catalyses 2-[(2R,5Z)-2-carboxy-4-methylthiazol-5(2H)-ylidene]ethyl phosphate + 4-amino-2-methyl-5-(diphosphooxymethyl)pyrimidine + 2 H(+) = thiamine phosphate + CO2 + diphosphate. It carries out the reaction 2-(2-carboxy-4-methylthiazol-5-yl)ethyl phosphate + 4-amino-2-methyl-5-(diphosphooxymethyl)pyrimidine + 2 H(+) = thiamine phosphate + CO2 + diphosphate. It catalyses the reaction 4-methyl-5-(2-phosphooxyethyl)-thiazole + 4-amino-2-methyl-5-(diphosphooxymethyl)pyrimidine + H(+) = thiamine phosphate + diphosphate. It functions in the pathway cofactor biosynthesis; thiamine diphosphate biosynthesis; thiamine phosphate from 4-amino-2-methyl-5-diphosphomethylpyrimidine and 4-methyl-5-(2-phosphoethyl)-thiazole: step 1/1. Its function is as follows. Condenses 4-methyl-5-(beta-hydroxyethyl)thiazole monophosphate (THZ-P) and 2-methyl-4-amino-5-hydroxymethyl pyrimidine pyrophosphate (HMP-PP) to form thiamine monophosphate (TMP). The protein is Thiamine-phosphate synthase of Bacillus anthracis (strain A0248).